Consider the following 313-residue polypeptide: Porphobilinogen deaminase (313 aa).

Cys-242 carries the S-(dipyrrolylmethanemethyl)cysteine modification.

It belongs to the HMBS family. As to quaternary structure, monomer. Dipyrromethane serves as cofactor.

It catalyses the reaction 4 porphobilinogen + H2O = hydroxymethylbilane + 4 NH4(+). The protein operates within porphyrin-containing compound metabolism; protoporphyrin-IX biosynthesis; coproporphyrinogen-III from 5-aminolevulinate: step 2/4. In terms of biological role, tetrapolymerization of the monopyrrole PBG into the hydroxymethylbilane pre-uroporphyrinogen in several discrete steps. The polypeptide is Porphobilinogen deaminase (Pseudomonas aeruginosa (strain LESB58)).